Consider the following 530-residue polypeptide: MATQVPVQSGAEKSNFTLNPDYGKMMEFGTNSAIVSAFIQMLFSSKNKFSFPMVFVMIRNMAVLLLVKTCLEDSKAFLDKFKLTNLNSLKFSWQRMMHKHLTYTIQHQSNGKWMYENTPISMTLLTPFFEQRQILIGRPDNYYYSYRTCLLKISITNERINIIFPDIQSVVQHVNNDIIHRNREIICGDRTVMYKVSIGNGAVPNLDPVAISKAYGTDIYLQLERSIRNYFFIDIVMKFQSIPFCINFNGEPGTGKTTFGSYIANKGIFDRIIIYNLVQSTNFDFKDNLNKIEMKIDQSTNKSKPMDGSEKVLIIFDEIDKWLESYIENKIHKMRDEARVTKQSNGGSAGGDKNTGTIIEGFQKLTPEEEQEKKNQLRFTFLDQLYNVVDGHTLKNNKKYVIIFNTNHFDNMFVGSPERFNALKDRFQKYEFKKLRKREIINYLNYVNDCFKNYDLTEEDKNILLSDTFDVDNLCVSNTNIYDDIPNDMVVSFRNLQKILRANHFNINRVVEHLSQIECSEIFTSDDIPS.

This is an uncharacterized protein from Acanthamoeba polyphaga (Amoeba).